The primary structure comprises 315 residues: 4-diphosphocytidyl-2-C-methyl-D-erythritol kinase (315 aa).

Lys26 is an active-site residue. 111 to 121 (PLAGGLAGGSA) contacts ATP. The active site involves Asp153.

This sequence belongs to the GHMP kinase family. IspE subfamily.

The catalysed reaction is 4-CDP-2-C-methyl-D-erythritol + ATP = 4-CDP-2-C-methyl-D-erythritol 2-phosphate + ADP + H(+). The protein operates within isoprenoid biosynthesis; isopentenyl diphosphate biosynthesis via DXP pathway; isopentenyl diphosphate from 1-deoxy-D-xylulose 5-phosphate: step 3/6. Its function is as follows. Catalyzes the phosphorylation of the position 2 hydroxy group of 4-diphosphocytidyl-2C-methyl-D-erythritol. This chain is 4-diphosphocytidyl-2-C-methyl-D-erythritol kinase, found in Salinispora arenicola (strain CNS-205).